Reading from the N-terminus, the 152-residue chain is UPF0225 protein YchJ (152 aa).

This sequence belongs to the UPF0225 family.

The polypeptide is UPF0225 protein YchJ (Escherichia coli O17:K52:H18 (strain UMN026 / ExPEC)).